An 80-amino-acid polypeptide reads, in one-letter code: Probable small nuclear ribonucleoprotein G (80 aa).

Positions 5-76 constitute a Sm domain; it reads GQPPDLKKYM…IVTVEALEPV (72 aa).

This sequence belongs to the snRNP Sm proteins family.

The protein resides in the nucleus. Probable common Sm protein, is found in U1 and U2 snRNPs and may be part of the spliceosome. The polypeptide is Probable small nuclear ribonucleoprotein G (Arabidopsis thaliana (Mouse-ear cress)).